We begin with the raw amino-acid sequence, 584 residues long: Protein FAM117B (584 aa).

The interval 1–214 (MSQRVRRNGS…SSSSSIIRRT (214 aa)) is disordered. The residue at position 10 (serine 10) is a Phosphoserine. A compositionally biased stretch (gly residues) spans 53–79 (TRGGGGGGNNGGNGGASGPSGGGGSGG). Low complexity predominate over residues 80–90 (PRTASRSTSPT). At serine 102 the chain carries Phosphoserine. A compositionally biased stretch (low complexity) spans 114–132 (TSTRGTSPTRGTAPGARSS). Residues 133–142 (PPRPQPPPPL) show a composition bias toward pro residues. A compositionally biased stretch (polar residues) spans 145 to 154 (TVSSPSSSPT). Positions 204 to 214 (SSSSSSIIRRT) are enriched in low complexity. A phosphoserine mark is found at serine 206, serine 215, serine 216, and serine 268. Disordered stretches follow at residues 227–461 (GHWP…SYMF) and 551–584 (STNT…EAEG). Over residues 287–297 (RSKHSSRHHRD) the composition is skewed to basic residues. Serine 340 carries the phosphoserine modification. Residues 350-361 (IIIKETGEKEEQ) are compositionally biased toward basic and acidic residues. A compositionally biased stretch (polar residues) spans 379–392 (QRSSSTRSIDTQTP). Phosphoserine is present on serine 386. Positions 399 to 412 (SNNSSRSQSVSPTS) are enriched in low complexity. 2 positions are modified to phosphoserine: serine 444 and serine 452.

The protein is Protein FAM117B (Fam117b) of Mus musculus (Mouse).